The chain runs to 77 residues: Acyl carrier protein (77 aa).

The region spanning 2–77 (SDIEQRVKNV…LAIDYVKSHQ (76 aa)) is the Carrier domain. Ser37 bears the O-(pantetheine 4'-phosphoryl)serine mark.

The protein belongs to the acyl carrier protein (ACP) family. Post-translationally, 4'-phosphopantetheine is transferred from CoA to a specific serine of apo-ACP by AcpS. This modification is essential for activity because fatty acids are bound in thioester linkage to the sulfhydryl of the prosthetic group.

It localises to the cytoplasm. It participates in lipid metabolism; fatty acid biosynthesis. Its function is as follows. Carrier of the growing fatty acid chain in fatty acid biosynthesis. The protein is Acyl carrier protein of Leucothrix mucor.